We begin with the raw amino-acid sequence, 277 residues long: Large ribosomal subunit protein uL2 (277 aa).

A disordered region spans residues 199-277; it reads DHGNINDGKA…ILRSRHQRKS (79 aa).

It belongs to the universal ribosomal protein uL2 family. Part of the 50S ribosomal subunit. Forms a bridge to the 30S subunit in the 70S ribosome.

In terms of biological role, one of the primary rRNA binding proteins. Required for association of the 30S and 50S subunits to form the 70S ribosome, for tRNA binding and peptide bond formation. It has been suggested to have peptidyltransferase activity; this is somewhat controversial. Makes several contacts with the 16S rRNA in the 70S ribosome. The chain is Large ribosomal subunit protein uL2 from Mesorhizobium japonicum (strain LMG 29417 / CECT 9101 / MAFF 303099) (Mesorhizobium loti (strain MAFF 303099)).